A 150-amino-acid polypeptide reads, in one-letter code: Putative antitoxin VapB45 (150 aa).

Positions 124–150 are disordered; sequence AQRPVAAGRPRPRPQRPVSDRVSDQRR. Residues 141–150 are compositionally biased toward basic and acidic residues; sequence VSDRVSDQRR.

The protein belongs to the phD/YefM antitoxin family.

Possibly the antitoxin component of a type II toxin-antitoxin (TA) system. Its cognate toxin is VapC45 (Potential). This is Putative antitoxin VapB45 (vapB45) from Mycobacterium tuberculosis (strain CDC 1551 / Oshkosh).